The sequence spans 244 residues: Probable histone-lysine N-methyltransferase set-23 (244 aa).

The Pre-SET domain occupies 25–86 (EGCNCEAECS…SCRNRVVQCG (62 aa)). 9 residues coordinate Zn(2+): Cys27, Cys29, Cys33, Cys39, Cys41, Cys65, Cys69, Cys71, and Cys78. In terms of domain architecture, SET spans 89–213 (KKLEIFSTCE…RGEELCYDYG (125 aa)). Residues 101–103 (KGF), Asp141, Tyr143, Arg170, and 173–174 (NH) contribute to the S-adenosyl-L-methionine site. The Zn(2+) site is built by Cys176, Cys225, Cys227, and Cys232. The Post-SET domain maps to 221 to 237 (NRKLCLCKSEKCRKYLP).

The protein belongs to the class V-like SAM-binding methyltransferase superfamily. Histone-lysine methyltransferase family. Suvar3-9 subfamily.

The protein localises to the nucleus. It is found in the chromosome. The catalysed reaction is L-lysyl-[histone] + S-adenosyl-L-methionine = N(6)-methyl-L-lysyl-[histone] + S-adenosyl-L-homocysteine + H(+). Its function is as follows. Probable histone methyltransferase. Required for embryonic development. This is Probable histone-lysine N-methyltransferase set-23 (set-23) from Caenorhabditis elegans.